The chain runs to 49 residues: Large ribosomal subunit protein bL33 (49 aa).

The protein belongs to the bacterial ribosomal protein bL33 family.

This chain is Large ribosomal subunit protein bL33, found in Natranaerobius thermophilus (strain ATCC BAA-1301 / DSM 18059 / JW/NM-WN-LF).